The sequence spans 139 residues: MGGRSAQPRRFSFACRILHPAVAHDAMAGSRYILRAPASIIRLAQHGWLHCCLHFFLFPAMNDVCFVAKGSALYLFTVEIIVFGSPSLRHNVLSFFYFALPWFKRQCRLKVNFNRLKEIRGIAQVVRKAFFISKTLPCI.

This is an uncharacterized protein from Saccharomyces cerevisiae (strain ATCC 204508 / S288c) (Baker's yeast).